The sequence spans 171 residues: 3-hydroxydecanoyl-[acyl-carrier-protein] dehydratase (171 aa).

His-70 is an active-site residue.

The protein belongs to the thioester dehydratase family. FabA subfamily. As to quaternary structure, homodimer.

It localises to the cytoplasm. The enzyme catalyses a (3R)-hydroxyacyl-[ACP] = a (2E)-enoyl-[ACP] + H2O. It catalyses the reaction (3R)-hydroxydecanoyl-[ACP] = (2E)-decenoyl-[ACP] + H2O. It carries out the reaction (2E)-decenoyl-[ACP] = (3Z)-decenoyl-[ACP]. The protein operates within lipid metabolism; fatty acid biosynthesis. In terms of biological role, necessary for the introduction of cis unsaturation into fatty acids. Catalyzes the dehydration of (3R)-3-hydroxydecanoyl-ACP to E-(2)-decenoyl-ACP and then its isomerization to Z-(3)-decenoyl-ACP. Can catalyze the dehydratase reaction for beta-hydroxyacyl-ACPs with saturated chain lengths up to 16:0, being most active on intermediate chain length. This Shewanella sp. (strain MR-4) protein is 3-hydroxydecanoyl-[acyl-carrier-protein] dehydratase.